The sequence spans 152 residues: Protein SprT-like (152 aa).

The region spanning 7–148 (QRLVEEVSLQ…GKCKGKLNLI (142 aa)) is the SprT-like domain. His67 contributes to the Zn(2+) binding site. Residue Glu68 is part of the active site. His71 is a binding site for Zn(2+).

It belongs to the SprT family. Zn(2+) is required as a cofactor.

The protein localises to the cytoplasm. This Bacillus cereus (strain 03BB102) protein is Protein SprT-like.